Consider the following 329-residue polypeptide: PTS-dependent dihydroxyacetone kinase 1, dihydroxyacetone-binding subunit DhaK (329 aa).

Residues 7-329 (GTDQVVEQMV…LKLPVDTIAW (323 aa)) enclose the DhaK domain. Dihydroxyacetone is bound by residues 53-56 (GSGH), Lys-104, and Asp-109. The Proton acceptor role is filled by His-56. His-218 acts as the Tele-hemiaminal-histidine intermediate in catalysis.

In terms of assembly, homodimer. The dihydroxyacetone kinase complex is composed of a homodimer of DhaM, a homodimer of DhaK and the subunit DhaL.

Its subcellular location is the cytoplasm. It catalyses the reaction dihydroxyacetone + phosphoenolpyruvate = dihydroxyacetone phosphate + pyruvate. It participates in polyol metabolism; glycerol degradation. Its function is as follows. Dihydroxyacetone binding subunit of the dihydroxyacetone kinase, which is responsible for the phosphoenolpyruvate (PEP)-dependent phosphorylation of dihydroxyacetone via a phosphoryl group transfer from DhaL-ATP. This Listeria innocua serovar 6a (strain ATCC BAA-680 / CLIP 11262) protein is PTS-dependent dihydroxyacetone kinase 1, dihydroxyacetone-binding subunit DhaK.